Consider the following 236-residue polypeptide: uncharacterized protein (236 aa).

Over residues 1–12 the composition is skewed to basic residues; that stretch reads MKLLGHRKSHGH. A disordered region spans residues 1–108; the sequence is MKLLGHRKSH…KAANRARMTE (108 aa). Basic and acidic residues predominate over residues 13 to 31; that stretch reads QRADASPDAGSKDGCRPDS. Low complexity predominate over residues 32-47; sequence GRTSGSDTSRGSQTTG. Basic residues predominate over residues 52 to 65; it reads PTPKRNQSRRHTKK. The segment covering 67–78 has biased composition (low complexity); sequence PVAPAPMTAAQA. Positions 90-108 are enriched in basic and acidic residues; it reads LSREERRAEKAANRARMTE. Transmembrane regions (helical) follow at residues 142-162 and 166-186; these read NLLG…FAVP and FYLS…AIIL.

The protein resides in the cell membrane. This is an uncharacterized protein from Mycobacterium tuberculosis (strain CDC 1551 / Oshkosh).